The chain runs to 230 residues: Cytidylate kinase (230 aa).

Position 12 to 20 (12 to 20 (GPSGAGKGT)) interacts with ATP.

This sequence belongs to the cytidylate kinase family. Type 1 subfamily.

It localises to the cytoplasm. The catalysed reaction is CMP + ATP = CDP + ADP. It catalyses the reaction dCMP + ATP = dCDP + ADP. The chain is Cytidylate kinase from Shewanella pealeana (strain ATCC 700345 / ANG-SQ1).